The following is a 1088-amino-acid chain: RNA-directed RNA polymerase (1088 aa).

Positions 501–687 (LSYGDVTRFL…AKRYIAGGKI (187 aa)) constitute a RdRp catalytic domain.

The protein belongs to the reoviridae RNA-directed RNA polymerase family. Interacts with VP3 (Potential). Interacts with VP2; this interaction activates VP1. Interacts with NSP5; this interaction is probably necessary for the formation of functional virus factories. Interacts with NSP2; this interaction is weak. Mg(2+) serves as cofactor.

Its subcellular location is the virion. The catalysed reaction is RNA(n) + a ribonucleoside 5'-triphosphate = RNA(n+1) + diphosphate. In terms of biological role, RNA-directed RNA polymerase that is involved in both transcription and genome replication. Together with VP3 capping enzyme, forms an enzyme complex positioned near the channels situated at each of the five-fold vertices of the core. Following infection, the outermost layer of the virus is lost, leaving a double-layered particle (DLP) made up of the core and VP6 shell. VP1 then catalyzes the transcription of fully conservative plus-strand genomic RNAs that are extruded through the DLP's channels into the cytoplasm where they function as mRNAs for translation of viral proteins. One copy of each of the viral (+)RNAs is also recruited during core assembly, together with newly synthesized polymerase complexes and VP2. The polymerase of these novo-formed particles catalyzes the synthesis of complementary minus-strands leading to dsRNA formation. To do so, the polymerase specifically recognizes and binds 4 bases 5'-UGUG-3' in the conserved 3'-sequence of plus-strand RNA templates. VP2 presumably activates the autoinhibited VP1-RNA complex to coordinate packaging and genome replication. Once dsRNA synthesis is complete, the polymerase switches to the transcriptional mode, thus providing secondary transcription. In Macaca mulatta (Rhesus macaque), this protein is RNA-directed RNA polymerase.